Reading from the N-terminus, the 117-residue chain is Large ribosomal subunit protein uL18 (117 aa).

The protein belongs to the universal ribosomal protein uL18 family. As to quaternary structure, part of the 50S ribosomal subunit; part of the 5S rRNA/L5/L18/L25 subcomplex. Contacts the 5S and 23S rRNAs.

In terms of biological role, this is one of the proteins that bind and probably mediate the attachment of the 5S RNA into the large ribosomal subunit, where it forms part of the central protuberance. This chain is Large ribosomal subunit protein uL18, found in Pasteurella multocida (strain Pm70).